The chain runs to 339 residues: Heat-inducible transcription repressor HrcA (339 aa).

It belongs to the HrcA family.

Negative regulator of class I heat shock genes (grpE-dnaK-dnaJ and groELS operons). Prevents heat-shock induction of these operons. The chain is Heat-inducible transcription repressor HrcA from Frankia casuarinae (strain DSM 45818 / CECT 9043 / HFP020203 / CcI3).